A 1116-amino-acid chain; its full sequence is Error-prone DNA polymerase 1 (1116 aa).

This sequence belongs to the DNA polymerase type-C family. DnaE2 subfamily.

The protein resides in the cytoplasm. The enzyme catalyses DNA(n) + a 2'-deoxyribonucleoside 5'-triphosphate = DNA(n+1) + diphosphate. DNA polymerase involved in damage-induced mutagenesis and translesion synthesis (TLS). It is not the major replicative DNA polymerase. The chain is Error-prone DNA polymerase 1 from Rhizobium meliloti (strain 1021) (Ensifer meliloti).